A 338-amino-acid polypeptide reads, in one-letter code: Starch-binding domain-containing protein 1 (338 aa).

The Extracellular segment spans residues 1–6; that stretch reads MGAVWS. Residues 7–23 traverse the membrane as a helical segment; it reads ALLVGGGLAGALILWLL. Over 24–338 the chain is Cytoplasmic; sequence RGDSGAPGKD…KVVHGWWGIH (315 aa). Disordered stretches follow at residues 30 to 73 and 120 to 148; these read PGKD…RELV and KIPD…WRLP. Low complexity predominate over residues 36–52; it reads AEPPQKGAPPGEAAAPG. Gly residues predominate over residues 53–62; that stretch reads DGPGGGGSGG. The residue at position 68 (serine 68) is a Phosphoserine. Positions 122–132 are enriched in basic and acidic residues; sequence PDTHSRADSEA. Residues serine 140, serine 167, and serine 179 each carry the phosphoserine modification. The short motif at 185–191 is the LIR element; sequence HEDWEVV. Serine 195, serine 196, serine 205, serine 209, serine 212, serine 220, and serine 223 each carry phosphoserine. One can recognise a CBM20 domain in the interval 238 to 337; the sequence is SLKPQQVSIQ…DKVVHGWWGI (100 aa).

In terms of assembly, interacts with the ATG8 family proteins GABARAP and GABARAPL1. Interacts with several glycogen-associated proteins, such as GYS2 (liver glycogen synthase), GDE (glycogen debranching enzyme), GBE1 (glycogen branching enzyme 1) and EPM2A (Laforin). In terms of processing, ubiquitinated, which leads to proteasomal degradation. As to expression, expressed at high level in glycogen-accumulating organs such as muscle and liver. Trace signals are also found in brain, kidney, and pancreas.

It is found in the preautophagosomal structure membrane. The protein resides in the endoplasmic reticulum membrane. It localises to the cell membrane. Its subcellular location is the sarcolemma. The protein localises to the T-tubule. Its function is as follows. Acts as a cargo receptor for glycogen. Delivers its cargo to an autophagic pathway called glycophagy, resulting in the transport of glycogen to lysosomes. This chain is Starch-binding domain-containing protein 1, found in Mus musculus (Mouse).